The sequence spans 755 residues: Periplasmic nitrate reductase (755 aa).

The tat-type signal signal peptide spans 1–32; it reads MSTSRRDFLKYFAMSAAVAAASGAGFGSLALA. The region spanning 38–93 is the 4Fe-4S Mo/W bis-MGD-type domain; sequence EKWVKGVCRYCGTGCGVLVGVKDGKAVAIQGDPNNHNAGLLCLKGSLLIPVLNSKE. [4Fe-4S] cluster is bound by residues cysteine 45, cysteine 48, cysteine 52, and cysteine 79. Residues lysine 81, glutamine 143, asparagine 168, cysteine 172, 208–212, 236–238, 255–257, methionine 340, glutamine 344, asparagine 450, 475–477, and 647–656 contribute to the Mo-bis(molybdopterin guanine dinucleotide) site; these read NTSEA, DPR, GTD, IEA, and SMRVIDHWHT. Substrate is bound by residues 648–653 and phenylalanine 721; that span reads MRVIDH. 2 residues coordinate Mo-bis(molybdopterin guanine dinucleotide): asparagine 729 and lysine 746.

This sequence belongs to the prokaryotic molybdopterin-containing oxidoreductase family. NasA/NapA/NarB subfamily. As to quaternary structure, monomer. Component of the periplasmic nitrate reductase NapAB complex composed of NapA and NapB. Requires [4Fe-4S] cluster as cofactor. The cofactor is Mo-bis(molybdopterin guanine dinucleotide). Predicted to be exported by the Tat system. The position of the signal peptide cleavage has been experimentally proven.

It localises to the periplasm. It carries out the reaction 2 Fe(II)-[cytochrome] + nitrate + 2 H(+) = 2 Fe(III)-[cytochrome] + nitrite + H2O. Activated by potassium and sodium ions and inhibited by magnesium and calcium ions. Catalytic subunit of the periplasmic nitrate reductase complex NapAB. Receives electrons from NapB and catalyzes the reduction of nitrate to nitrite. The sequence is that of Periplasmic nitrate reductase from Desulfovibrio desulfuricans (strain ATCC 27774 / DSM 6949 / MB).